Reading from the N-terminus, the 507-residue chain is ATP synthase subunit alpha, chloroplastic (507 aa).

170 to 177 (GDRQTGKT) is a binding site for ATP.

The protein belongs to the ATPase alpha/beta chains family. F-type ATPases have 2 components, CF(1) - the catalytic core - and CF(0) - the membrane proton channel. CF(1) has five subunits: alpha(3), beta(3), gamma(1), delta(1), epsilon(1). CF(0) has four main subunits: a, b, b' and c.

It localises to the plastid. The protein resides in the chloroplast thylakoid membrane. It catalyses the reaction ATP + H2O + 4 H(+)(in) = ADP + phosphate + 5 H(+)(out). Functionally, produces ATP from ADP in the presence of a proton gradient across the membrane. The alpha chain is a regulatory subunit. This chain is ATP synthase subunit alpha, chloroplastic, found in Marchantia polymorpha (Common liverwort).